A 208-amino-acid chain; its full sequence is Small ribosomal subunit protein uS4 (208 aa).

Residues 95-159 (TIIDNIVYRA…LKKLIGSNIE (65 aa)) enclose the S4 RNA-binding domain.

The protein belongs to the universal ribosomal protein uS4 family. In terms of assembly, part of the 30S ribosomal subunit. Contacts protein S5. The interaction surface between S4 and S5 is involved in control of translational fidelity.

Functionally, one of the primary rRNA binding proteins, it binds directly to 16S rRNA where it nucleates assembly of the body of the 30S subunit. With S5 and S12 plays an important role in translational accuracy. This Borreliella afzelii (strain PKo) (Borrelia afzelii) protein is Small ribosomal subunit protein uS4.